Consider the following 971-residue polypeptide: MDPVRPLFRGPTPVHPSQCVRMPGCWPQAPRPLEPAWGRAGPAGRGLVFRKPEDSSPPLQPVQKDSVGLVSMFRGMGLDTAFRPPSKREVPPLGRGVLGRGLSANMVRKDREEPRSSLPDPSVLAAGDSKLAEASVGWSRMLGRGSSEVSLLPLGRAASSIGRGMDKPPSAFGLTARDPPRLPQPPALSPTSLHSADPPPVLTMERKEKELLVKQGSKGTPQSLGLNLIKIQCHNEAVYQYHVTFSPSVECKSMRFGMLKDHQSVTGNVTAFDGSILYLPVKLQQVVELKSQRKTDDAEISIKIQLTKILEPCSDLCIPFYNVVFRRVMKLLDMKLVGRNFYDPTSAMVLQQHRLQIWPGYAASIRRTDGGLFLLADVSHKVIRNDSVLDVMHAIYQQNKEHFQDECSKLLVGSIVITRYNNRTYRIDDVDWNKTPKDSFVMSDGKEITFLEYYSKNYGITVKEDDQPLLIHRPSERQNNHGMLLKGEILLLPELSFMTGIPEKMKKDFRAMKDLTQQINLSPKQHHGALECLLQRISQNETASNELTRWGLSLHKDVHKIEGRLLPMERINLRNTSFVTSEDLNWVKEVTRDASILTIPMHFWALFYPKRAMDQARELVNMLEKIAGPIGMRISPPAWVELKDDRIETYIRTIQSLLGVEGKIQMVVCIIMGTRDDLYGAIKKLCCVQSPVPSQVINVRTIGQPTRLRSVAQKILLQMNCKLGGELWGVDIPLKQLMVIGMDVYHDPSRGMRSVVGFVASINLTLTKWYSRVVFQMPHQEIVDSLKLCLVGSLKKYYEVNHCLPEKIVVYRDGVSDGQLKTVANYEIPQLQKCFEAFDNYHPKMVVFVVQKKISTNLYLAAPDHFVTPSPGTVVDHTITSCEWVDFYLLAHHVRQGCGIPTHYICVLNTANLSPDHMQRLTFKLCHMYWNWPGTIRVPAPCKYAHKLAFLSGQILHHEPAIQLCGNLFFL.

Residue Arg45 is modified to Symmetric dimethylarginine. Arg74 carries the omega-N-methylarginine; by PRMT5; alternate modification. Arg74 is modified (symmetric dimethylarginine; by PRMT5; alternate). Arg83 carries the post-translational modification Omega-N-methylarginine; alternate. Symmetric dimethylarginine; alternate occurs at positions 83 and 95. Omega-N-methylarginine; by PRMT5; alternate is present on Arg95. Arg100 carries the post-translational modification Symmetric dimethylarginine; by PRMT5; alternate. At Arg100 the chain carries Omega-N-methylarginine; alternate. The segment at 102–124 (LSANMVRKDREEPRSSLPDPSVL) is disordered. Residues Arg144 and Arg156 each carry the symmetric dimethylarginine modification. The interval 159 to 200 (SSIGRGMDKPPSAFGLTARDPPRLPQPPALSPTSLHSADPPP) is disordered. Arg163 bears the Symmetric dimethylarginine; by PRMT5 mark. One can recognise a PAZ domain in the interval 387-500 (SVLDVMHAIY…LLPELSFMTG (114 aa)). A Symmetric dimethylarginine; by PRMT5 modification is found at Arg549. Positions 666 to 957 (MVVCIIMGTR…LAFLSGQILH (292 aa)) constitute a Piwi domain. Catalysis depends on residues Asp743, Glu781, Asp813, and His946.

It belongs to the argonaute family. Piwi subfamily. Interacts with DDX4, MAEL, EIF3A, EIF4E, EIF4G, PRMT5 and WDR77. Associates with EIF4E- and EIF4G-containing m7G cap-binding complexes. Interacts (when methylated on arginine residues) with TDRD1 and TDRKH/TDRD2. Interacts with TDRD12. Component of the PET complex, at least composed of EXD1, PIWIL2, TDRD12 and piRNAs. Interacts with MOV10L1. Interacts with GPAT2. Interacts with Tex19.1 and, probably, Tex19.2. Interacts (via PIWI domain) with BMAL1 and CLOCK. Interacts with GSK3B. Interacts with TEX15. It depends on Mg(2+) as a cofactor. In terms of processing, arginine methylation by PRMT5 is required for the interaction with Tudor domain-containing protein TDRD1 and subsequent localization to the meiotic nuage, also named P granule. In terms of tissue distribution, expressed in adult testis, specifically in spermatocytes and in spermatogonia. Only detected in primordial germ cells of both sexes. Widely expressed in tumors. Also present at early stages of oocyte growth. Present in the mitotic spermatogonia. Not detected in the first stages of meiosis (preleptotene and leptotene). Detected at the late zygotene stage and increases throughout pachytene, declining from this stage onward until expression stops at the early round spermatid stage (at protein level).

It is found in the cytoplasm. Functionally, endoribonuclease that plays a central role during spermatogenesis by repressing transposable elements and preventing their mobilization, which is essential for the germline integrity. Plays an essential role in meiotic differentiation of spermatocytes, germ cell differentiation and in self-renewal of spermatogonial stem cells. Its presence in oocytes suggests that it may participate in similar functions during oogenesis in females. Acts via the piRNA metabolic process, which mediates the repression of transposable elements during meiosis by forming complexes composed of piRNAs and Piwi proteins and govern the methylation and subsequent repression of transposons. During piRNA biosynthesis, plays a key role in the piRNA amplification loop, also named ping-pong amplification cycle, by acting as a 'slicer-competent' piRNA endoribonuclease that cleaves primary piRNAs, which are then loaded onto 'slicer-incompetent' PIWIL4. PIWIL2 slicing produces a pre-miRNA intermediate, which is then processed in mature piRNAs, and as well as a 16 nucleotide by-product that is degraded. Required for PIWIL4/MIWI2 nuclear localization and association with secondary piRNAs antisense. Besides their function in transposable elements repression, piRNAs are probably involved in other processes during meiosis such as translation regulation. Indirectly modulates expression of genes such as PDGFRB, SLC2A1, ITGA6, GJA7, THY1, CD9 and STRA8. Represses circadian rhythms by promoting the stability and activity of core clock components BMAL1 and CLOCK by inhibiting GSK3B-mediated phosphorylation and ubiquitination-dependent degradation of these proteins. The sequence is that of Piwi-like protein 2 from Mus musculus (Mouse).